Consider the following 211-residue polypeptide: RING finger protein 222 (211 aa).

Residues 14–65 (CPVCYEKFRDLDGASRTLSCGHVFCHDCLVKYLLSTRVDGQVQRTIVCPICR) form an RING-type zinc finger. Residues 187–207 (LITLIAVVAVVAAILPWVLLV) form a helical membrane-spanning segment.

Its subcellular location is the membrane. In Mus musculus (Mouse), this protein is RING finger protein 222 (Rnf222).